The primary structure comprises 495 residues: Maternal protein exuperantia-1 (495 aa).

Disordered stretches follow at residues 197–217 (DESA…SSND) and 377–495 (TIKP…AATN). Polar residues-rich tracts occupy residues 207 to 216 (ENVNRNGSSN) and 398 to 414 (AASS…TSTE).

In terms of biological role, ensures the proper localization of the mRNA of the bicoid gene to the anterior regions of the oocyte thus playing a fundamental role in the establishment of the polarity of the oocyte. May bind the bcd mRNA. The sequence is that of Maternal protein exuperantia-1 (exu1) from Drosophila pseudoobscura pseudoobscura (Fruit fly).